A 48-amino-acid polypeptide reads, in one-letter code: Palustrin-3b (48 aa).

The cysteines at positions 43 and 48 are disulfide-linked.

In terms of tissue distribution, expressed by the skin glands.

The protein resides in the secreted. In terms of biological role, antimicrobial activity against Gram-negative bacterium E.coli. This Lithobates palustris (Pickerel frog) protein is Palustrin-3b.